Here is a 589-residue protein sequence, read N- to C-terminus: Cytochrome P450 monooxygenase TRI13 (589 aa).

The signal sequence occupies residues 1–21; the sequence is MFLSLCLMVLALYLLYKWALP. Residues Asn-52, Asn-219, Asn-243, and Asn-366 are each glycosylated (N-linked (GlcNAc...) asparagine). Residue Cys-531 participates in heme binding.

This sequence belongs to the cytochrome P450 family. Heme serves as cofactor.

The protein operates within sesquiterpene biosynthesis; trichothecene biosynthesis. In terms of biological role, cytochrome P450 monooxygenase; part of the core gene cluster that mediates the biosynthesis of trichothecenes, a very large family of chemically related bicyclic sesquiterpene compounds acting as mycotoxins, including T2-toxin. The biosynthesis of trichothecenes begins with the cyclization of farnesyl diphosphate to trichodiene and is catalyzed by the trichodiene synthase TRI5. Trichodiene undergoes a series of oxygenations catalyzed by the cytochrome P450 monooxygenase TRI4. TRI4 controls the addition of four oxygens at C-2, C-3, C-11, and the C-12, C-13-epoxide to form the intermediate isotrichotriol. Isotrichotriol then undergoes a non-enzymatic isomerization and cyclization to form isotrichodermol. During this process, the oxygen at the C-2 position becomes the pyran ring oxygen and the hydroxyl group at C-11 is lost. More complex type A trichothecenes are built by modifying isotrichodermol through a series of paired hydroxylation and acetylation or acylation steps. Isotrichodermol is converted to isotrichodermin by the acetyltransferase TRI101. TRI101 encodes a C-3 transacetylase that acts as a self-protection or resistance factor during biosynthesis and that the presence of a free C-3 hydroxyl group is a key component of Fusarium trichothecene phytotoxicity. A second hydroxyl group is added to C-15 by the trichothecene C-15 hydroxylase TRI11, producing 15-decalonectrin, which is then acetylated by TRI3, producing calonectrin. A third hydroxyl group is added at C-4 by the cytochrome P450 monooxygenase TRI13, converting calonectrin to 3,15-diacetoxyspirpenol, which is subsequently acetylated by the acetyltransferase TRI7. A fourth hydroxyl group is added to C-8 by the cytochrome P450 monooxygenase TRI1, followed by the addition of an isovaleryl moiety by TRI16. Finally, the acetyl group is removed from the C-3 position by the trichothecene C-3 esterase TRI8 to produce T-2 toxin. This is Cytochrome P450 monooxygenase TRI13 from Fusarium sporotrichioides.